Consider the following 76-residue polypeptide: uncharacterized protein (76 aa).

Residues 27-76 (SINNGEGSSVVHRDATAPPTPPVVPTSTLQVPGLQRARTPEPNDPRVANL) form a disordered region.

This is an uncharacterized protein from Caenorhabditis elegans.